Here is a 581-residue protein sequence, read N- to C-terminus: NADH-quinone oxidoreductase subunit C/D (581 aa).

An NADH dehydrogenase I subunit C region spans residues 1–172 (MSAFELVTEL…PLFNMTASLF (172 aa)). Residues 196–581 (ELMILNYGPH…IDYVMSDVDR (386 aa)) are NADH dehydrogenase I subunit D.

The protein in the N-terminal section; belongs to the complex I 30 kDa subunit family. In the C-terminal section; belongs to the complex I 49 kDa subunit family. As to quaternary structure, NDH-1 is composed of 13 different subunits. Subunits NuoB, CD, E, F, and G constitute the peripheral sector of the complex.

It is found in the cell inner membrane. The enzyme catalyses a quinone + NADH + 5 H(+)(in) = a quinol + NAD(+) + 4 H(+)(out). Its function is as follows. NDH-1 shuttles electrons from NADH, via FMN and iron-sulfur (Fe-S) centers, to quinones in the respiratory chain. The immediate electron acceptor for the enzyme in this species is believed to be ubiquinone. Couples the redox reaction to proton translocation (for every two electrons transferred, four hydrogen ions are translocated across the cytoplasmic membrane), and thus conserves the redox energy in a proton gradient. This is NADH-quinone oxidoreductase subunit C/D from Rhodopseudomonas palustris (strain ATCC BAA-98 / CGA009).